A 363-amino-acid polypeptide reads, in one-letter code: UDP-N-acetylglucosamine--N-acetylmuramyl-(pentapeptide) pyrophosphoryl-undecaprenol N-acetylglucosamine transferase (363 aa).

Residues 15–17 (TGG), N127, R169, S197, I251, 270–275 (ALTVSE), and Q296 contribute to the UDP-N-acetyl-alpha-D-glucosamine site.

This sequence belongs to the glycosyltransferase 28 family. MurG subfamily.

The protein resides in the cell inner membrane. It carries out the reaction di-trans,octa-cis-undecaprenyl diphospho-N-acetyl-alpha-D-muramoyl-L-alanyl-D-glutamyl-meso-2,6-diaminopimeloyl-D-alanyl-D-alanine + UDP-N-acetyl-alpha-D-glucosamine = di-trans,octa-cis-undecaprenyl diphospho-[N-acetyl-alpha-D-glucosaminyl-(1-&gt;4)]-N-acetyl-alpha-D-muramoyl-L-alanyl-D-glutamyl-meso-2,6-diaminopimeloyl-D-alanyl-D-alanine + UDP + H(+). The protein operates within cell wall biogenesis; peptidoglycan biosynthesis. Functionally, cell wall formation. Catalyzes the transfer of a GlcNAc subunit on undecaprenyl-pyrophosphoryl-MurNAc-pentapeptide (lipid intermediate I) to form undecaprenyl-pyrophosphoryl-MurNAc-(pentapeptide)GlcNAc (lipid intermediate II). In Dichelobacter nodosus (strain VCS1703A), this protein is UDP-N-acetylglucosamine--N-acetylmuramyl-(pentapeptide) pyrophosphoryl-undecaprenol N-acetylglucosamine transferase.